The sequence spans 156 residues: Small ribosomal subunit protein uS7 (156 aa).

It belongs to the universal ribosomal protein uS7 family. Part of the 30S ribosomal subunit. Contacts proteins S9 and S11.

Functionally, one of the primary rRNA binding proteins, it binds directly to 16S rRNA where it nucleates assembly of the head domain of the 30S subunit. Is located at the subunit interface close to the decoding center, probably blocks exit of the E-site tRNA. This chain is Small ribosomal subunit protein uS7, found in Leuconostoc citreum (strain KM20).